Consider the following 177-residue polypeptide: Large ribosomal subunit protein uL6 (177 aa).

Belongs to the universal ribosomal protein uL6 family. In terms of assembly, part of the 50S ribosomal subunit.

This protein binds to the 23S rRNA, and is important in its secondary structure. It is located near the subunit interface in the base of the L7/L12 stalk, and near the tRNA binding site of the peptidyltransferase center. The sequence is that of Large ribosomal subunit protein uL6 from Brucella anthropi (strain ATCC 49188 / DSM 6882 / CCUG 24695 / JCM 21032 / LMG 3331 / NBRC 15819 / NCTC 12168 / Alc 37) (Ochrobactrum anthropi).